A 635-amino-acid chain; its full sequence is Probable potassium transport system protein Kup (635 aa).

A run of 12 helical transmembrane segments spans residues 22 to 42, 59 to 79, 111 to 131, 148 to 168, 180 to 200, 216 to 236, 259 to 279, 297 to 317, 349 to 369, 378 to 398, 404 to 424, and 428 to 448; these read LVIGAIGVVFGDIGTSPLYTL, VLGILSLVFWALMLVVTLKYV, MYVVGILGIFGASLFFGDGVI, APKLEAFVVPITLVVLGMLFL, AFGPITLVWFFALGAIGVYNM, VLFFVEHNWHAVFVLGAVVLA, WQFVVLPMLTLTYLGQGALVL, ALYPMIVLATAATVIASQALI, IYVPAVNWCLLLAVAVAVVGF, AYGVSVTGTMLITTVLMVIYA, VPAPLLWLFALVFLAVDCAFF, and IIKFLDGAWFPLLLGLILFTL.

It belongs to the HAK/KUP transporter (TC 2.A.72) family.

Its subcellular location is the cell inner membrane. The enzyme catalyses K(+)(in) + H(+)(in) = K(+)(out) + H(+)(out). In terms of biological role, transport of potassium into the cell. Likely operates as a K(+):H(+) symporter. In Xanthomonas oryzae pv. oryzae (strain KACC10331 / KXO85), this protein is Probable potassium transport system protein Kup.